The following is a 172-amino-acid chain: Small ribosomal subunit protein uS5 (172 aa).

The S5 DRBM domain occupies 17–80 (LREKMISVNR…EQARRNMFKV (64 aa)).

The protein belongs to the universal ribosomal protein uS5 family. Part of the 30S ribosomal subunit. Contacts proteins S4 and S8.

With S4 and S12 plays an important role in translational accuracy. In terms of biological role, located at the back of the 30S subunit body where it stabilizes the conformation of the head with respect to the body. The chain is Small ribosomal subunit protein uS5 from Paraburkholderia xenovorans (strain LB400).